A 109-amino-acid chain; its full sequence is Ferredoxin (109 aa).

4Fe-4S ferredoxin-type domains lie at 2-30 (TYVVTDECVKCKYTDCVEVCPVDCFYEGE) and 31-60 (FMLVINPDECIDCGVCVPDCPIDAIKPESP). Residues C9 and C17 each coordinate [3Fe-4S] cluster. Residues C21, C40, C43, and C46 each coordinate [4Fe-4S] cluster. C50 lines the [3Fe-4S] cluster pocket.

[4Fe-4S] cluster is required as a cofactor. Requires [3Fe-4S] cluster as cofactor.

In terms of biological role, ferredoxins are iron-sulfur proteins that transfer electrons in a wide variety of metabolic reactions. The protein is Ferredoxin (fdxA) of Rickettsia prowazekii (strain Madrid E).